We begin with the raw amino-acid sequence, 204 residues long: Ribosomal RNA small subunit methyltransferase J (204 aa).

Residues 55–56 (RD), 71–72 (ER), and Asp123 each bind S-adenosyl-L-methionine.

Belongs to the methyltransferase superfamily. RsmJ family.

It localises to the cytoplasm. The enzyme catalyses guanosine(1516) in 16S rRNA + S-adenosyl-L-methionine = N(2)-methylguanosine(1516) in 16S rRNA + S-adenosyl-L-homocysteine + H(+). Functionally, specifically methylates the guanosine in position 1516 of 16S rRNA. The protein is Ribosomal RNA small subunit methyltransferase J of Rhodopseudomonas palustris (strain TIE-1).